Here is a 232-residue protein sequence, read N- to C-terminus: Large ribosomal subunit protein uL1 (232 aa).

Belongs to the universal ribosomal protein uL1 family. In terms of assembly, part of the 50S ribosomal subunit.

In terms of biological role, binds directly to 23S rRNA. The L1 stalk is quite mobile in the ribosome, and is involved in E site tRNA release. Functionally, protein L1 is also a translational repressor protein, it controls the translation of the L11 operon by binding to its mRNA. This is Large ribosomal subunit protein uL1 from Hahella chejuensis (strain KCTC 2396).